The sequence spans 312 residues: DNA-directed RNA polymerase subunit alpha (312 aa).

Residues methionine 1 to threonine 229 form an alpha N-terminal domain (alpha-NTD) region. Residues proline 240 to valine 312 form an alpha C-terminal domain (alpha-CTD) region.

It belongs to the RNA polymerase alpha chain family. As to quaternary structure, in cyanobacteria the RNAP catalytic core is composed of 2 alpha, 1 beta, 1 beta', 1 gamma and 1 omega subunit. When a sigma factor is associated with the core the holoenzyme is formed, which can initiate transcription.

The enzyme catalyses RNA(n) + a ribonucleoside 5'-triphosphate = RNA(n+1) + diphosphate. Its function is as follows. DNA-dependent RNA polymerase catalyzes the transcription of DNA into RNA using the four ribonucleoside triphosphates as substrates. This chain is DNA-directed RNA polymerase subunit alpha, found in Prochlorococcus marinus (strain AS9601).